Consider the following 185-residue polypeptide: Hypoxanthine/guanine phosphoribosyltransferase (185 aa).

This sequence belongs to the purine/pyrimidine phosphoribosyltransferase family. Archaeal HPRT subfamily. Homodimer.

It is found in the cytoplasm. It catalyses the reaction IMP + diphosphate = hypoxanthine + 5-phospho-alpha-D-ribose 1-diphosphate. The enzyme catalyses GMP + diphosphate = guanine + 5-phospho-alpha-D-ribose 1-diphosphate. The protein operates within purine metabolism; IMP biosynthesis via salvage pathway; IMP from hypoxanthine: step 1/1. Functionally, catalyzes a salvage reaction resulting in the formation of IMP that is energically less costly than de novo synthesis. This is Hypoxanthine/guanine phosphoribosyltransferase (hpt) from Methanococcus maripaludis (strain DSM 14266 / JCM 13030 / NBRC 101832 / S2 / LL).